Reading from the N-terminus, the 132-residue chain is Small ribosomal subunit protein uS8 (132 aa).

This sequence belongs to the universal ribosomal protein uS8 family. In terms of assembly, part of the 30S ribosomal subunit. Contacts proteins S5 and S12.

Its function is as follows. One of the primary rRNA binding proteins, it binds directly to 16S rRNA central domain where it helps coordinate assembly of the platform of the 30S subunit. The chain is Small ribosomal subunit protein uS8 from Corynebacterium jeikeium (strain K411).